We begin with the raw amino-acid sequence, 99 residues long: MKDKNFTGIPKELQPWEGFDRNNEVVKISVDKRRYGKVVTLIEGIDPKVEDINEIAKSLKKKVASGGTVKDGKIIELQGDHRETARAQLESMGFKVQMV.

Belongs to the SUI1 family.

The polypeptide is Protein translation factor SUI1 homolog (Picrophilus torridus (strain ATCC 700027 / DSM 9790 / JCM 10055 / NBRC 100828 / KAW 2/3)).